A 499-amino-acid chain; its full sequence is Importin subunit alpha-8 (499 aa).

The IBB domain maps to Met1–Met57. ARM repeat units follow at residues Thr101–Ser141, Ser144–Gly183, Ala186–Arg226, Asp229–Lys268, Lys271–Ala310, Asp313–Ala352, Pro354–Thr393, and Gln397–Gln436.

The protein belongs to the importin alpha family. In terms of assembly, binds to importin subunit beta-1/KPNB1 via the IBB domain; this complex dissociates in the presence of RAN-GTP. Shows a limited binding to the RB1 nuclear localization signal (NLS), but not to the SV40, nor NPM1 NLSs. Interacts with RSL1D1. In terms of tissue distribution, expressed predominantly in ovary. Isoform 1 is the predominant form.

It localises to the nucleus. In terms of biological role, functions in nuclear protein import. The polypeptide is Importin subunit alpha-8 (Kpna7) (Mus musculus (Mouse)).